A 254-amino-acid chain; its full sequence is Alcohol dehydrogenase 2 (254 aa).

10-33 (FVAGLGGIGFDTSREIVKRGPKNL) contacts NAD(+). A substrate-binding site is contributed by S138. Catalysis depends on Y151, which acts as the Proton acceptor.

This sequence belongs to the short-chain dehydrogenases/reductases (SDR) family. As to quaternary structure, homodimer.

The catalysed reaction is a primary alcohol + NAD(+) = an aldehyde + NADH + H(+). It carries out the reaction a secondary alcohol + NAD(+) = a ketone + NADH + H(+). The sequence is that of Alcohol dehydrogenase 2 (Adh2) from Drosophila mojavensis (Fruit fly).